The sequence spans 443 residues: Protein FAM83A (443 aa).

Positions 311-403 (DSGVSVMTDS…YYQRNYAPDS (93 aa)) are disordered. Residues 315–326 (SVMTDSTPESVN) show a composition bias toward polar residues. 2 stretches are compositionally biased toward low complexity: residues 327–344 (TTSEPFSSTSTASISNDS) and 388–399 (SNYQPNYYQRNY).

This sequence belongs to the FAM83 family.

Its subcellular location is the cytoplasm. Its function is as follows. May function in the epidermal growth factor receptor/EGFR signaling pathway. This chain is Protein FAM83A, found in Xenopus laevis (African clawed frog).